Consider the following 126-residue polypeptide: uncharacterized protein (126 aa).

This is an uncharacterized protein from Rickettsia prowazekii (strain Madrid E).